The primary structure comprises 1338 residues: Protein dispatched homolog 3 (1338 aa).

Residues 1 to 67 (MDTEDDPLLQ…VGWIFTNPYC (67 aa)) lie on the Cytoplasmic side of the membrane. A helical membrane pass occupies residues 68–88 (AGFILFLGCAIPAVLAVVMFL). Topologically, residues 89–406 (HYPALDIDIS…YEVRRTFNND (318 aa)) are lumenal. Positions 164-196 (TRAKRSAPQGRTSSPEPRAHPHPGNETSRVTRG) are disordered. Residues 401–559 (RTFNNDMLLA…LFTMPAALGI (159 aa)) form the SSD domain. A helical transmembrane segment spans residues 407 to 427 (MLLAFISSSCIAVLVYILTSC). Residue serine 428 is a topological domain, cytoplasmic. A helical membrane pass occupies residues 429–449 (VFLSFFGIASIGLSCLVALFL). Residues 450–452 (YHV) lie on the Lumenal side of the membrane. Residues 453–473 (VFGIQYLGILNGVAAFVIVGI) form a helical membrane-spanning segment. The Cytoplasmic portion of the chain corresponds to 474-517 (GVDDVFVFINTYRQATHLKDLRLRMIHTIQTAGKATFFTSLTTA). The helical transmembrane segment at 518–538 (AAYAANIFSQIPAVHDFGLFM) threads the bilayer. Residue serine 539 is a topological domain, lumenal. The chain crosses the membrane as a helical span at residues 540–560 (LIVSCCWVAVLFTMPAALGIW). Residues 561-672 (TLYVSPLESS…WVLWSAVKSR (112 aa)) are Cytoplasmic-facing. The chain crosses the membrane as a helical span at residues 673–693 (WVIVGLFLLVLLLSIFFASRL). The Lumenal segment spans residues 694–1128 (RPASRAPVLF…IFMEIIGVQS (435 aa)). Positions 747-768 (SLEKKKRGSASPWGSKGSISDT) are disordered. The helical transmembrane segment at 1129–1149 (ALYGLILSLVICVAAVAVFTT) threads the bilayer. Residue histidine 1150 is a topological domain, cytoplasmic. Residues 1151–1171 (ILLLLPVLLSILGVVCLVVTI) traverse the membrane as a helical segment. Over 1172 to 1237 (MYWSGWEMGA…TIEAIRHVGV (66 aa)) the chain is Lumenal. Residues 1238-1258 (AIVSSAVTTVIATVPLFFCII) form a helical membrane-spanning segment. Residues 1259-1266 (APFAKFGK) lie on the Cytoplasmic side of the membrane. Residues 1267 to 1287 (IVALNTGVSILYTLTVSTALL) form a helical membrane-spanning segment. The Lumenal portion of the chain corresponds to 1288–1302 (SIMGPGTFTRSRTSC). Residues 1303–1323 (LKAVAGVLLAGLLGLCICLAL) form a helical membrane-spanning segment. The Cytoplasmic segment spans residues 1324 to 1338 (LKGGFKIPLPNGTAL).

It belongs to the patched family. As to expression, expressed in retina, hippocampus and cerebellum. Expressed in the ganglion and bipolar cells of the inner and outer nuclear layers of the retina and in Purkinje cells (at protein level). Expressed strongly in brain and retina, weakly in testis and bone marrow.

The protein resides in the endoplasmic reticulum membrane. It is found in the nucleus membrane. The protein localises to the cytoplasmic vesicle membrane. Plays a role in neuronal proliferation and differentiation. Plays a role in the accumulation of cellular cholesterol. Involved in intracellular lipid droplet formation. May contribute to cholesterol homeostasis in neuronal cells. This is Protein dispatched homolog 3 from Gallus gallus (Chicken).